A 146-amino-acid polypeptide reads, in one-letter code: Nucleoside diphosphate kinase (146 aa).

Residues Lys-11, Phe-59, Arg-87, Thr-93, Arg-104, and Asn-114 each coordinate ATP. The active-site Pros-phosphohistidine intermediate is His-117.

Belongs to the NDK family. As to quaternary structure, homotetramer. The cofactor is Mg(2+).

The protein localises to the cytoplasm. The enzyme catalyses a 2'-deoxyribonucleoside 5'-diphosphate + ATP = a 2'-deoxyribonucleoside 5'-triphosphate + ADP. It catalyses the reaction a ribonucleoside 5'-diphosphate + ATP = a ribonucleoside 5'-triphosphate + ADP. Its function is as follows. Major role in the synthesis of nucleoside triphosphates other than ATP. The ATP gamma phosphate is transferred to the NDP beta phosphate via a ping-pong mechanism, using a phosphorylated active-site intermediate. This chain is Nucleoside diphosphate kinase, found in Anaplasma marginale (strain Florida).